The chain runs to 940 residues: Translation initiation factor IF-2 (940 aa).

2 disordered regions span residues Glu48–Lys264 and Gln278–Lys351. Basic and acidic residues-rich tracts occupy residues Ser65 to Val95, Phe112 to Ala125, Asn155 to Ala206, Arg232 to Glu258, and Ala292 to Asn301. Residues Asn314 to Asn332 show a composition bias toward low complexity. The tr-type G domain occupies Glu442–Glu609. The G1 stretch occupies residues Gly451–Thr458. Gly451–Thr458 provides a ligand contact to GTP. The interval Gly476–His480 is G2. Residues Asp497–Gly500 form a G3 region. Residues Asp497–His501 and Asn551–Asp554 each bind GTP. The tract at residues Asn551–Asp554 is G4. The segment at Ser587–Lys589 is G5.

This sequence belongs to the TRAFAC class translation factor GTPase superfamily. Classic translation factor GTPase family. IF-2 subfamily.

The protein localises to the cytoplasm. In terms of biological role, one of the essential components for the initiation of protein synthesis. Protects formylmethionyl-tRNA from spontaneous hydrolysis and promotes its binding to the 30S ribosomal subunits. Also involved in the hydrolysis of GTP during the formation of the 70S ribosomal complex. This chain is Translation initiation factor IF-2, found in Streptococcus suis (strain 98HAH33).